A 312-amino-acid polypeptide reads, in one-letter code: MASGNCTTPTTFILSGLTDNPRLQMPLFMVFLVIYTTTLLTNLGLIALIGMDLHLQTPMYIFLQNLSFTDAAYSTVITPKMLATFLEERRTISYVGCILQYFSFVLLTTSEWLLLAVMAYDRYVAICKPLLYPSIMTKAVCWRLVKGLYSLAFLNSLVHTSGLLKLSFCSSNVVNHFFCDNRPLFQISSSSTTLNELLVIISGSLFVMSSIITILISYVFIILTVVMIRSKDGKYKAFSTCTSHLMAVSLFHGTVIFMYLRSVKLFSLDTDKIASLFYTVVIPMLNPLIYSWRNKEVKDALRRLTATSVWLH.

The Extracellular portion of the chain corresponds to 1 to 26 (MASGNCTTPTTFILSGLTDNPRLQMP). Asn5 carries an N-linked (GlcNAc...) asparagine glycan. A helical transmembrane segment spans residues 27–49 (LFMVFLVIYTTTLLTNLGLIALI). Topologically, residues 50–57 (GMDLHLQT) are cytoplasmic. A helical membrane pass occupies residues 58–79 (PMYIFLQNLSFTDAAYSTVITP). At 80-100 (KMLATFLEERRTISYVGCILQ) the chain is on the extracellular side. Cysteines 97 and 179 form a disulfide. The helical transmembrane segment at 101-120 (YFSFVLLTTSEWLLLAVMAY) threads the bilayer. The Cytoplasmic portion of the chain corresponds to 121–139 (DRYVAICKPLLYPSIMTKA). A helical transmembrane segment spans residues 140–164 (VCWRLVKGLYSLAFLNSLVHTSGLL). At 165–205 (KLSFCSSNVVNHFFCDNRPLFQISSSSTTLNELLVIISGSL) the chain is on the extracellular side. The helical transmembrane segment at 206-226 (FVMSSIITILISYVFIILTVV) threads the bilayer. Residues 227 to 239 (MIRSKDGKYKAFS) lie on the Cytoplasmic side of the membrane. Residues 240–260 (TCTSHLMAVSLFHGTVIFMYL) form a helical membrane-spanning segment. Over 261–271 (RSVKLFSLDTD) the chain is Extracellular. Residues 272–292 (KIASLFYTVVIPMLNPLIYSW) form a helical membrane-spanning segment. Residues 293-312 (RNKEVKDALRRLTATSVWLH) lie on the Cytoplasmic side of the membrane.

This sequence belongs to the G-protein coupled receptor 1 family.

Its subcellular location is the cell membrane. In terms of biological role, odorant receptor. The sequence is that of Olfactory receptor-like protein COR2 (COR2) from Gallus gallus (Chicken).